A 276-amino-acid polypeptide reads, in one-letter code: MPLMKTKPTSPGRRSMVKVVNPDLHKGKPFASLLEPQFQKAGRNNNGHITTRHKGGGHKHHYRVVDFKRNDKDGIPAKVERLEYDPNRSANIALILFADGECRYIPAAKGMTVGQAIMNGSEAPIKSGNNLPIRNIPVGSTIHCVEIMPGKGAQVARSAGGSAVLLAREGVYAQVRLRSGEVRRVLIDCRATIGEVGNEEHSLRQIGKAGANRWRGIRPTVRGVAMNPVDHPHGGGEGRTGEGRVPVSPWGTPTKGYRTRRNKRTTSMIVQRRQKR.

Positions 224 to 258 are disordered; that stretch reads VAMNPVDHPHGGGEGRTGEGRVPVSPWGTPTKGYR. Positions 230–242 are enriched in basic and acidic residues; the sequence is DHPHGGGEGRTGE.

This sequence belongs to the universal ribosomal protein uL2 family. As to quaternary structure, part of the 50S ribosomal subunit. Forms a bridge to the 30S subunit in the 70S ribosome.

Functionally, one of the primary rRNA binding proteins. Required for association of the 30S and 50S subunits to form the 70S ribosome, for tRNA binding and peptide bond formation. It has been suggested to have peptidyltransferase activity; this is somewhat controversial. Makes several contacts with the 16S rRNA in the 70S ribosome. The polypeptide is Large ribosomal subunit protein uL2 (Polynucleobacter necessarius subsp. necessarius (strain STIR1)).